The primary structure comprises 107 residues: U1-lycotoxin-Ls1k (107 aa).

Residues 1-20 (MMKVLVVVALLVTLISYSSS) form the signal peptide. A propeptide spanning residues 21 to 41 (EGIDDLEADELLSLMANEQTR) is cleaved from the precursor. 4 cysteine pairs are disulfide-bonded: cysteine 44–cysteine 59, cysteine 51–cysteine 68, cysteine 58–cysteine 86, and cysteine 70–cysteine 84.

It belongs to the neurotoxin 19 (CSTX) family. 04 (U1-Lctx) subfamily. As to expression, expressed by the venom gland.

The protein resides in the secreted. The polypeptide is U1-lycotoxin-Ls1k (Lycosa singoriensis (Wolf spider)).